The following is a 136-amino-acid chain: ATP synthase epsilon chain (136 aa).

The tract at residues 95-115 is disordered; the sequence is DFSEAQSRLEEANKGSDRREQ. Positions 101–115 are enriched in basic and acidic residues; the sequence is SRLEEANKGSDRREQ.

It belongs to the ATPase epsilon chain family. In terms of assembly, F-type ATPases have 2 components, CF(1) - the catalytic core - and CF(0) - the membrane proton channel. CF(1) has five subunits: alpha(3), beta(3), gamma(1), delta(1), epsilon(1). CF(0) has three main subunits: a, b and c.

It is found in the cellular thylakoid membrane. Functionally, produces ATP from ADP in the presence of a proton gradient across the membrane. In Rippkaea orientalis (strain PCC 8801 / RF-1) (Cyanothece sp. (strain PCC 8801)), this protein is ATP synthase epsilon chain.